A 258-amino-acid chain; its full sequence is 14-3-3 protein 6 (258 aa).

Residues 238 to 258 (DMQDDGTDEIKEATPKPDDNE) form a disordered region. The span at 245-258 (DEIKEATPKPDDNE) shows a compositional bias: basic and acidic residues.

This sequence belongs to the 14-3-3 family. In terms of assembly, homodimer.

This Solanum lycopersicum (Tomato) protein is 14-3-3 protein 6 (TFT6).